The chain runs to 448 residues: Dual specificity mitogen-activated protein kinase kinase 5 (448 aa).

The interval 18–25 (VIRIKIPN) is interaction with MAPK7. Positions 18–109 (VIRIKIPNSG…EPLQIFPRAC (92 aa)) constitute a PB1 domain. Positions 64–68 (DEDGD) are interaction with MAP3K2/MAP3K3. Positions 116 to 144 (NIHGLKVNTRAGPSQHTSPVVSDSLPSNS) are disordered. The interval 117–131 (IHGLKVNTRAGPSQH) is interaction with MAPK7. Residues 126-144 (AGPSQHTSPVVSDSLPSNS) show a composition bias toward polar residues. The 254-residue stretch at 166-419 (IRYRDTLGHG…PEELMGHPFI (254 aa)) folds into the Protein kinase domain. ATP-binding positions include 172–180 (LGHGNGGTV) and Lys195. Residue Asp283 is the Proton acceptor of the active site. Ser311 bears the Phosphoserine mark. At Thr315 the chain carries Phosphothreonine.

This sequence belongs to the protein kinase superfamily. STE Ser/Thr protein kinase family. MAP kinase kinase subfamily. As to quaternary structure, interacts with PARD6A, MAP3K3 and MAPK7. Forms a complex with SQSTM1 and PRKCZ or PRKCI. Mg(2+) serves as cofactor. Post-translationally, activated by phosphorylation on Ser/Thr by MAP kinase kinase kinases. Expressed in the liver and brain (at protein level). In terms of tissue distribution, expressed in the liver, muscle, testes, lung, kidney, spleen, heart and brain (at protein level).

Its subcellular location is the cytoplasm. It is found in the cytosol. It localises to the membrane. It carries out the reaction L-seryl-[protein] + ATP = O-phospho-L-seryl-[protein] + ADP + H(+). The catalysed reaction is L-threonyl-[protein] + ATP = O-phospho-L-threonyl-[protein] + ADP + H(+). The enzyme catalyses L-tyrosyl-[protein] + ATP = O-phospho-L-tyrosyl-[protein] + ADP + H(+). Acts as a scaffold for the formation of a ternary MAP3K2/MAP3K3-MAP3K5-MAPK7 signaling complex. Activation of this pathway appears to play a critical role in protecting cells from stress-induced apoptosis, neuronal survival and cardiac development and angiogenesis. As part of the MAPK/ERK signaling pathway, acts as a negative regulator of apoptosis in cardiomyocytes via promotion of STUB1/CHIP-mediated ubiquitination and degradation of ICER-type isoforms of CREM. The protein is Dual specificity mitogen-activated protein kinase kinase 5 (Map2k5) of Rattus norvegicus (Rat).